The chain runs to 615 residues: MARTKNAGVPLAAEVVSQTINDEVVVASAAEVDSEATNLISNDDRADSDEETEALQPLKMYFGPSDYTKPFKITAKCYLHKAVGLLESHLEESELKWFLEHPQFKHFFHMHKDPNHKVMGMWLLFIRTTCLDKKGSMVYCQWRTDPMFGPGATIQYPDVEKKLLSMKKPSEARLRVVVLYFLCNRWKGVVADLELCKTFPWGKNAFEENYLAFEAIPVLRKNFCEDIESADPQCPRMCKMKFKSSTMKGFPMSDVYDKLGTTKSILAPTPDENLLLKRIMDKECGVNDVDDLIADGWKKRLVDEERTICFEPLFNEDVAHQSFVANNAPSTVVQAPRKAAVEKKGKGKTAAALTSPSDEGLTEVVNEMKNLMENGFKSMNKRMTNFSKKYEEQDKRLKLMETAIKSIQSSTGTDDAYGSKEIDDRENELEEGSDANGGDNEREVREKETEIDKEVAQGDNEREVGEKETEIDKEVGQGDSDIFDGNKDMELNKEVAESTIGVAESEKDKEVTESEKDKEVAESEIGVPESEKDIEVADSEKDKEVPQDDEMDGGKVTEPSKKRGKSHDDGDDPSEGCVKKPKVVKKVAKSRTDAKPVYRSPIQTRYARKKTKKNV.

Ser48 carries the phosphoserine modification. Over residues 424-433 (DRENELEEGS) the composition is skewed to acidic residues. The interval 424 to 615 (DRENELEEGS…YARKKTKKNV (192 aa)) is disordered. Composition is skewed to basic and acidic residues over residues 439 to 476 (DNER…KEVG), 484 to 496 (DGNK…KEVA), 504 to 521 (ESEK…KEVA), and 529 to 561 (ESEK…EPSK). Composition is skewed to basic residues over residues 579 to 589 (KKPKVVKKVAK) and 606 to 615 (YARKKTKKNV).

This is an uncharacterized protein from Arabidopsis thaliana (Mouse-ear cress).